A 303-amino-acid chain; its full sequence is D-alanine--D-alanine ligase (303 aa).

Residues 104–300 (KLLWNAVGLP…FERLVERVLE (197 aa)) form the ATP-grasp domain. Residue 132 to 187 (IAKLGLPLFVKPASEGSSVGVSKVKTAEQLLPAIEEALKYDSIVLVEENLAGAEYS) participates in ATP binding. Mg(2+)-binding residues include Asp254, Glu267, and Asn269.

This sequence belongs to the D-alanine--D-alanine ligase family. Mg(2+) is required as a cofactor. Requires Mn(2+) as cofactor.

The protein localises to the cytoplasm. It carries out the reaction 2 D-alanine + ATP = D-alanyl-D-alanine + ADP + phosphate + H(+). Its pathway is cell wall biogenesis; peptidoglycan biosynthesis. Its function is as follows. Cell wall formation. The polypeptide is D-alanine--D-alanine ligase (Glaesserella parasuis serovar 5 (strain SH0165) (Haemophilus parasuis)).